A 236-amino-acid polypeptide reads, in one-letter code: Pyridoxine 5'-phosphate synthase (236 aa).

Position 6 (Asn-6) interacts with 3-amino-2-oxopropyl phosphate. Asp-8–His-9 is a binding site for 1-deoxy-D-xylulose 5-phosphate. Position 17 (Arg-17) interacts with 3-amino-2-oxopropyl phosphate. His-42 serves as the catalytic Proton acceptor. 1-deoxy-D-xylulose 5-phosphate contacts are provided by Arg-44 and His-49. Glu-69 functions as the Proton acceptor in the catalytic mechanism. Thr-99 contributes to the 1-deoxy-D-xylulose 5-phosphate binding site. His-190 serves as the catalytic Proton donor. Residues Gly-191 and Gly-212–His-213 each bind 3-amino-2-oxopropyl phosphate.

It belongs to the PNP synthase family. In terms of assembly, homooctamer; tetramer of dimers.

The protein resides in the cytoplasm. The catalysed reaction is 3-amino-2-oxopropyl phosphate + 1-deoxy-D-xylulose 5-phosphate = pyridoxine 5'-phosphate + phosphate + 2 H2O + H(+). It participates in cofactor biosynthesis; pyridoxine 5'-phosphate biosynthesis; pyridoxine 5'-phosphate from D-erythrose 4-phosphate: step 5/5. In terms of biological role, catalyzes the complicated ring closure reaction between the two acyclic compounds 1-deoxy-D-xylulose-5-phosphate (DXP) and 3-amino-2-oxopropyl phosphate (1-amino-acetone-3-phosphate or AAP) to form pyridoxine 5'-phosphate (PNP) and inorganic phosphate. The polypeptide is Pyridoxine 5'-phosphate synthase (Chlorobium phaeobacteroides (strain DSM 266 / SMG 266 / 2430)).